The following is a 243-amino-acid chain: Pleckstrin homology domain-containing family B member 1 (243 aa).

The PH domain occupies 21 to 128; that stretch reads ALVRGGWLWR…WKTALLEANS (108 aa).

Homodimer. Interacts (via PH domain) with MYO1C. Interacts (via PH domain) with MYO7A. Binds transducins. As to expression, highly expressed in retina and brain. Levels are very low or not detectable in all other tissues tested.

The protein resides in the membrane. It localises to the cytoplasm. The sequence is that of Pleckstrin homology domain-containing family B member 1 (PLEKHB1) from Homo sapiens (Human).